A 130-amino-acid chain; its full sequence is Small ribosomal subunit protein uS8 (130 aa).

Belongs to the universal ribosomal protein uS8 family.

It is found in the cytoplasm. The polypeptide is Small ribosomal subunit protein uS8 (RPS15A) (Brassica napus (Rape)).